The chain runs to 692 residues: MSEQSICQARASVMIYDDTSKKWVPIKPGQQGFSRINIYHNTANNTFRVVGVKLQDQQVVINYSLVKGLKYNQATPTFHQWRDARQVYGLNFASKEEATTFSNAMLFALNIMNSQDGGPAAQRQAQNIQNGPSPDDMEIQRRQMLEQQQRQETLERRTSTTVSTLQINVSSSPSHCQSPPPDYSNFSASPSTGAVPPPSYAKVISSAAASPELSSKSTNKSSNRTSEPPELQNSHCGSEPSTSQSSAFSPIRPSNGTVSRSIKQISLSPPPAPGSHSPLSLHQSVRHPSLSFSPCSSSPPVSVTSSVQKNISPQSPIPVVLPVIPVQNSRIRGCSDKMVQNPIVPQTGPSDQAEEPLTSQISLSSPRTQVKCVDRSFLSYIETVPVAQLPMITSPFGILTQASPQPFQSSTHPSQQSYQSMSHFVSLPPPYAAVSELTLPKRTTPYMTSSTITQFSPVLPPGHPSSAAMVASVGSAPAPASGPPPPPPPGPPPPSGGTPPPAPPLPAGGSQGVVYEESPASGLAAALAGAKLRKVQRPEDGSSSPCGATKTDANRTSSGGGGGGLMEEMNKLLAKRRKAASYTDKPGDKKEEECQNEDASLSSSPVTRGPTPQNSSDLGKKPWERSNSVEKPVPSLLSRMKPVSSSNDVSTDALDFDRMKQEILEEVVRELHKVKEEIIDAIRQELSRISTT.

The WH1 domain occupies 1–112; it reads MSEQSICQAR…NAMLFALNIM (112 aa). 3 disordered regions span residues 116–310, 466–518, and 531–650; these read DGGP…VQKN, SAAM…YEES, and KLRK…NDVS. Polar residues-rich tracts occupy residues 123–132 and 159–169; these read RQAQNIQNGP and STTVSTLQINV. Over residues 214-226 the composition is skewed to low complexity; the sequence is SSKSTNKSSNRTS. A compositionally biased stretch (polar residues) spans 231-267; it reads LQNSHCGSEPSTSQSSAFSPIRPSNGTVSRSIKQISL. 2 stretches are compositionally biased toward low complexity: residues 288–310 and 466–479; these read PSLS…VQKN and SAAM…APAP. Over residues 480 to 506 the composition is skewed to pro residues; it reads ASGPPPPPPPGPPPPSGGTPPPAPPLP. An EVH2 block A region spans residues 522–542; that stretch reads GLAAALAGAKLRKVQRPEDGS. The tract at residues 522–689 is EVH2; the sequence is GLAAALAGAK…DAIRQELSRI (168 aa). The KLKR motif lies at 531 to 534; it reads KLRK. An EVH2 block B region spans residues 563-580; it reads GGLMEEMNKLLAKRRKAA. Polar residues predominate over residues 597–617; the sequence is EDASLSSSPVTRGPTPQNSSD. Residues 618–628 show a composition bias toward basic and acidic residues; it reads LGKKPWERSNS. The segment at 655-689 is EVH2 block C; it reads DFDRMKQEILEEVVRELHKVKEEIIDAIRQELSRI.

This sequence belongs to the Ena/VASP family. During embryonic and tadpole development, expressed in the cement gland, brain, neural tube, myotome and neural placodes, including the otic, lateral line and olfactory placodes. All isoforms show similar spatial expression patterns.

It is found in the cytoplasm. The protein resides in the cytoskeleton. The protein localises to the stress fiber. It localises to the cell projection. Its subcellular location is the lamellipodium. Ena/VASP proteins are actin-associated proteins involved in a range of processes dependent on cytoskeleton remodeling and cell polarity such as axon guidance and lamellipodial and filopodial dynamics in migrating cells. Evl enhances actin nucleation and polymerization. The chain is Ena/VASP-like protein from Xenopus laevis (African clawed frog).